A 211-amino-acid chain; its full sequence is Dual specificity protein phosphatase 26 (211 aa).

The Tyrosine-protein phosphatase domain maps to 60–207 (NHADEVWPGL…LLALDRRLRQ (148 aa)). Cys152 serves as the catalytic Phosphocysteine intermediate.

This sequence belongs to the protein-tyrosine phosphatase family. Non-receptor class dual specificity subfamily. Interacts with HSF4. Brain. In the brain it is expressed ubiquitously except in the hippocampus. Expressed in embryonal cancers (retinoblastoma, neuroepithilioma and neuroblastoma) and in anaplatic thyroid cancer.

It is found in the cytoplasm. The protein resides in the nucleus. Its subcellular location is the golgi apparatus. It carries out the reaction O-phospho-L-tyrosyl-[protein] + H2O = L-tyrosyl-[protein] + phosphate. It catalyses the reaction O-phospho-L-seryl-[protein] + H2O = L-seryl-[protein] + phosphate. The catalysed reaction is O-phospho-L-threonyl-[protein] + H2O = L-threonyl-[protein] + phosphate. Its function is as follows. Inactivates MAPK1 and MAPK3 which leads to dephosphorylation of heat shock factor protein 4 and a reduction in its DNA-binding activity. Inhibits MAP kinase p38 by dephosphorylating it and inhibits p38-mediated apoptosis in anaplastic thyroid cancer cells. Can also induce activation of MAP kinase p38 and c-Jun N-terminal kinase (JNK). The polypeptide is Dual specificity protein phosphatase 26 (DUSP26) (Homo sapiens (Human)).